The sequence spans 166 residues: MSQATKRKHVVKEVLGEHMVPSDQQQIVRVLRTPGNNLHEVETAQGQRFLVSMPSKYRKNIWIKRGDFLIVDPIEEGEKVKAEISFVLCKDHVRSLQKDGHWPEAFSQVTEKDNNDRNRQTQPELPAEPQSSGEESSSEDDSDLFVNTNRRQYHESEEESEEEEAA.

Residues 5 to 89 enclose the S1-like domain; sequence TKRKHVVKEV…VKAEISFVLC (85 aa). The short motif at 6–12 is the Nuclear localization signal element; that stretch reads KRKHVVK. Thr33 is subject to Phosphothreonine. The Nuclear localization signal motif lies at 56-65; it reads KYRKNIWIKR. Positions 99–166 are disordered; that stretch reads DGHWPEAFSQ…EEESEEEEAA (68 aa). The span at 110–119 shows a compositional bias: basic and acidic residues; sequence TEKDNNDRNR. Residues Ser132, Ser136, Ser137, Ser138, Ser156, and Ser160 each carry the phosphoserine modification. Positions 156 to 166 are enriched in acidic residues; it reads SEEESEEEEAA.

Belongs to the EIF1AD family. As to quaternary structure, interacts with GAPDH and STAT1.

Its subcellular location is the nucleus. Its function is as follows. Plays a role into cellular response to oxidative stress. Decreases cell proliferation. This is Probable RNA-binding protein EIF1AD (EIF1AD) from Bos taurus (Bovine).